Here is a 40-residue protein sequence, read N- to C-terminus: Protein 4.1 (40 aa).

This chain is Protein 4.1, found in Escherichia phage T7 (Bacteriophage T7).